A 138-amino-acid chain; its full sequence is Phosphoribosyl-AMP cyclohydrolase (138 aa).

D84 contacts Mg(2+). C85 serves as a coordination point for Zn(2+). Residues D86 and D88 each contribute to the Mg(2+) site. Zn(2+) is bound by residues C102 and C109.

It belongs to the PRA-CH family. Homodimer. It depends on Mg(2+) as a cofactor. Zn(2+) is required as a cofactor.

It is found in the cytoplasm. The enzyme catalyses 1-(5-phospho-beta-D-ribosyl)-5'-AMP + H2O = 1-(5-phospho-beta-D-ribosyl)-5-[(5-phospho-beta-D-ribosylamino)methylideneamino]imidazole-4-carboxamide. Its pathway is amino-acid biosynthesis; L-histidine biosynthesis; L-histidine from 5-phospho-alpha-D-ribose 1-diphosphate: step 3/9. Functionally, catalyzes the hydrolysis of the adenine ring of phosphoribosyl-AMP. The protein is Phosphoribosyl-AMP cyclohydrolase of Burkholderia pseudomallei (strain K96243).